We begin with the raw amino-acid sequence, 140 residues long: Large ribosomal subunit protein bL17 (140 aa).

It belongs to the bacterial ribosomal protein bL17 family. In terms of assembly, part of the 50S ribosomal subunit. Contacts protein L32.

This Rhizobium etli (strain CIAT 652) protein is Large ribosomal subunit protein bL17.